Here is a 452-residue protein sequence, read N- to C-terminus: Probable ECA polymerase (452 aa).

11 helical membrane-spanning segments follow: residues 6 to 26 (FSGLLVVWLLSTLFIATLTWF), 37 to 57 (VFFSLLFLLTFFFGFPLTSVL), 63 to 83 (VGVAPPEILLQALLSAACFYG), 118 to 138 (VILMGIALVSVAIFFMHNGFL), 155 to 175 (GVALKRFFYFFIPAMLVVYFL), 181 to 201 (AWLFFLVSTVAFGLLTYMIVG), 207 to 227 (IIIAFAIFLFIGIIRGWISLW), 228 to 248 (MLAAAGVLGIVGMFWLALKRY), 341 to 361 (LVVMGGALFIPLGAIVVGLII), 378 to 398 (YKAAILHSFCFGAIFNMIVLV), and 410 to 430 (VFFLVVFGASLLVAKLLFWLF).

This sequence belongs to the WzyE family. In terms of assembly, probably part of a complex composed of WzxE, WzyE and WzzE.

The protein localises to the cell inner membrane. Its pathway is bacterial outer membrane biogenesis; enterobacterial common antigen biosynthesis. Probably involved in the polymerization of enterobacterial common antigen (ECA) trisaccharide repeat units. The polypeptide is Probable ECA polymerase (Salmonella gallinarum (strain 287/91 / NCTC 13346)).